We begin with the raw amino-acid sequence, 1906 residues long: MIEDKGPRVTDYFVVAGLTDTSTLLDQEINRTDTNSIGPKAPITDIAVIIKSAGETVPEGYTCVEATPSALQANLNYGSLKSPELFLCYRRGRDKPPLTDIGVLYEGKERLMPGCEVIQATPYGRCANVNNSSTTSQRIFITYRRAPPVRSQNSLAVTDICVIITSKGETPPHTFCKVDKNLNCGMWGSNVFLCYKKSVPASNAIAYKAGLIFRYPEEDYESFPLSPSVPLFCLPMGATIECWDPQIKYPLPVFSTFVLTGSSAEKVYGAAIQFYEPYSQERLTEKQLTQLGLLTLVEKRVVSKPINSNKCICLLSHWPFFEAFKNFLMFIYKVSVSGPHPLPIEKHISHFMQNIPFPSPQRPRILIQLSVHDAFILSQPVSTPLPLSGANFSSLLMNLGPENCATLLLLVLLESKILLHSLRPAVLTGVAEAVVAMIFPFQWQCPYIPLCPLSLAGVLSAPLPFIVGVDSRYFDLHDPPQDVVCIDLDTNTLYVADERKNINWKQLPKRPCKSLLGTLRRLYQQLCSVHRKPQESSAIEMTPIEADYSWQKKMTQLEMEIQETFLRFMASILKGYRSYLRPITEAPSNKATAADSLFDRQGFLKSRDRAYTKFYTLLSKTQIFIRFIEECSFVSDKDTGLAFFDDCIEKLFPDKGVERTEKVDLDSAEDTRLIELDDSQRSEHTVFIMPPEPPPDDGNNLSPQYSYTYFPRLDLKLFDSPQKLKLCFNRHPPGSSITNSPALMAKRTKQEIKTAHKLAKRCYTNPPQWAKYLFSHCYSLWFICLPAYVRVSHPKVRALQQAHDVLVKMRKTDVDPLDEVCYRVVMQLCGLWVNPVLAVRVLFEMKTARIKPNAITYGYYNKVVLESPWPSSTRSGIFLWTKVRNVVHGLAQFRQPLKKTGQKSQVFSISGGQSDQGYGSKDELVKEGADGHAPEEHTPPELTTTELHIEEECDISAIVSKHLQPTPEPQSPTEPPAWGSSIVKVPSGLFDTNNRTSTGSTSTVLFSTQAPVEDAVFSEVTNFKKNGDRGEKKQKHFPERSCSFSSESRAGMLLKKSSLDLNSSEMAIMMGADAKILTAALTCPKTSPPHVTRTHSFENVNCHLADSRTRMSEGTRDSEHRSSPVLEMLEESQELLEPVVGDNVAETAAEMTCNSLQSNSHSDQSRDTQAGAQDPVNKRSSSYATRKAIEREDVETGLDPLSLLATECVEKTSDSEDKLFSPVISRNLADEIESYMNLKSPLGSKSCSMELHGEGNQEPGSPAVFAHPLERSSSLPSDRGPPARDSTETEKSSPAVSSSKTLTGRFKPQSPYRAYKDRSTSLSALVRSSPNSSLGSVVNSLSGLKLDNILSGPKIDVLKSSMKQAATVASKMWVAVASAYSYSDDEEETNKDYSFPAGLEDHHIVGETLSPNTSVSGLVPSELTQSNTSLGSSSSSGDVGKLQCPAGEVPFSRNIKGQDFEKSDHGSSQNTSMSSIYQNCAMEVLMSSCSQCRACGALVYDEEIMAGWTADDSNLNTTCPFCKSNFLPLLNVEFKDLRGSASFFLKPSTSGDSLQSGSIPSASEPSEHKPTSSSAEPDLISFMDFSKHSETITEEASYTVESSDEIKKTNGDVQSVKMSSVPNSLSKRNVSLTRSHSVGGPLQNIDFSQRPFHGVSTVSLPSSLQEDVDHLGKRPSPPPVSVPYLSPLVLRKELESLLENEGDQVIHTSSFINQHPIIFWNLVWYFRRLDLPSNLPGLILTSEHCNGGVQLPLSSLSQDSKLVYIQLLWDNINLHQEPGEPLYVSWRNLNSEKKPSLLSEQQQAASALVETIRQSIQQNDVLKPINLLSQQMKPGTKRQRSLYREILFLSLVSLGRENIDIEAFDNEYGLAYRSLPSESLERLQRIDAPPSISVEWCRKCFGAPLI.

Residues 40–199 (KAPITDIAVI…NVFLCYKKSV (160 aa)) form the MABP domain. Positions 191-363 (VFLCYKKSVP…NIPFPSPQRP (173 aa)) constitute a uDENN domain. In terms of domain architecture, cDENN spans 384–520 (PLPLSGANFS…PCKSLLGTLR (137 aa)). Positions 522 to 640 (LYQQLCSVHR…CSFVSDKDTG (119 aa)) constitute a dDENN domain. Residues S702, S736, and S740 each carry the phosphoserine modification. A PPR repeat occupies 818-852 (DEVCYRVVMQLCGLWVNPVLAVRVLFEMKTARIKP). Over residues 904-917 (SQVFSISGGQSDQG) the composition is skewed to polar residues. 2 disordered regions span residues 904 to 942 (SQVFSISGGQSDQGYGSKDELVKEGADGHAPEEHTPPEL) and 963 to 984 (LQPTPEPQSPTEPPAWGSSIVK). Residues 920–939 (SKDELVKEGADGHAPEEHTP) are compositionally biased toward basic and acidic residues. Residue T966 is modified to Phosphothreonine. Residues 966 to 975 (TPEPQSPTEP) are compositionally biased toward pro residues. S971 bears the Phosphoserine mark. The residue at position 973 (T973) is a Phosphothreonine. Phosphoserine occurs at positions 987, 1000, 1043, 1058, 1096, and 1123. Positions 1154-1171 (NSLQSNSHSDQSRDTQAG) are enriched in polar residues. The disordered stretch occupies residues 1154 to 1184 (NSLQSNSHSDQSRDTQAGAQDPVNKRSSSYA). Phosphoserine occurs at positions 1181, 1221, 1240, 1248, and 1274. The interval 1246-1317 (SCSMELHGEG…PQSPYRAYKD (72 aa)) is disordered. Basic and acidic residues predominate over residues 1281 to 1291 (PPARDSTETEK). Residues 1292–1302 (SSPAVSSSKTL) show a composition bias toward polar residues. 3 positions are modified to phosphoserine: S1321, S1333, and S1342. 3 disordered regions span residues 1410-1440 (SPNTSVSGLVPSELTQSNTSLGSSSSSGDVG), 1548-1577 (STSGDSLQSGSIPSASEPSEHKPTSSSAEP), and 1596-1628 (ASYTVESSDEIKKTNGDVQSVKMSSVPNSLSKR). Positions 1423–1437 (LTQSNTSLGSSSSSG) are enriched in low complexity. Composition is skewed to polar residues over residues 1548–1564 (STSGDSLQSGSIPSASE) and 1611–1628 (GDVQSVKMSSVPNSLSKR). Residues S1620, S1624, S1626, S1637, and S1796 each carry the phosphoserine modification.

In terms of processing, phosphorylated in response to insulin.

The protein resides in the cytoplasmic vesicle membrane. The protein localises to the cell membrane. It is found in the cytoplasm. Its subcellular location is the cytosol. Functionally, guanine nucleotide exchange factor (GEF) activating RAB10. Promotes the exchange of GDP to GTP, converting inactive GDP-bound RAB10 into its active GTP-bound form. Thereby, stimulates SLC2A4/GLUT4 glucose transporter-enriched vesicles delivery to the plasma membrane in response to insulin. This is DENN domain-containing protein 4C (Dennd4c) from Mus musculus (Mouse).